Reading from the N-terminus, the 969-residue chain is ATP-dependent RNA helicase DBP10 (969 aa).

Disordered stretches follow at residues 1-73 (MVKN…KVED) and 78-97 (SLEL…DDDD). Acidic residues predominate over residues 32-59 (SDSESDDSSDGSDEEVQDVIEYSSDEEE). The short motif at 115–143 (GSFASFGLSKLILVNISKRGFRQPTPIQR) is the Q motif element. Residues 146 to 318 (IPLILQNRDI…KAGLVNPVLV (173 aa)) form the Helicase ATP-binding domain. 159 to 166 (ARTGSGKT) is a binding site for ATP. The DEAD box motif lies at 266-269 (DEAD). 3 disordered regions span residues 366–402 (QLND…PKAN), 860–924 (KTGA…LERG), and 946–969 (IRKD…KRKF). The segment covering 374 to 383 (DSDESAEEDE) has biased composition (acidic residues). Over residues 386–398 (KRRKRKSFNRKAM) the composition is skewed to basic residues. Positions 396–543 (KAMPKANELP…PMYEALERLS (148 aa)) constitute a Helicase C-terminal domain. Over residues 897–921 (EKAPRLPDKKRDDYHKQKKKVESAL) the composition is skewed to basic and acidic residues. A compositionally biased stretch (basic residues) spans 958–969 (AKNARPSKKRKF).

This sequence belongs to the DEAD box helicase family. DDX54/DBP10 subfamily.

The protein resides in the nucleus. It is found in the nucleolus. It carries out the reaction ATP + H2O = ADP + phosphate + H(+). Functionally, ATP-binding RNA helicase involved in the biogenesis of 60S ribosomal subunits and is required for the normal formation of 25S and 5.8S rRNAs. The polypeptide is ATP-dependent RNA helicase DBP10 (DBP10) (Candida glabrata (strain ATCC 2001 / BCRC 20586 / JCM 3761 / NBRC 0622 / NRRL Y-65 / CBS 138) (Yeast)).